Reading from the N-terminus, the 362-residue chain is 3-dehydroquinate synthase (362 aa).

Residues 70 to 75 (DGEKYK), 104 to 108 (GVIGD), 128 to 129 (TT), Lys-141, and Lys-150 contribute to the NAD(+) site. Zn(2+) is bound by residues Glu-183, His-246, and His-263.

It belongs to the sugar phosphate cyclases superfamily. Dehydroquinate synthase family. Requires Co(2+) as cofactor. The cofactor is Zn(2+). NAD(+) serves as cofactor.

It is found in the cytoplasm. The enzyme catalyses 7-phospho-2-dehydro-3-deoxy-D-arabino-heptonate = 3-dehydroquinate + phosphate. It participates in metabolic intermediate biosynthesis; chorismate biosynthesis; chorismate from D-erythrose 4-phosphate and phosphoenolpyruvate: step 2/7. Catalyzes the conversion of 3-deoxy-D-arabino-heptulosonate 7-phosphate (DAHP) to dehydroquinate (DHQ). The chain is 3-dehydroquinate synthase from Acinetobacter baylyi (strain ATCC 33305 / BD413 / ADP1).